Here is a 140-residue protein sequence, read N- to C-terminus: MAKKVDKVVKLQIPAGKANPAPPVGPALGQAGVNIMGFCKEFNARTQDQAGLIIPVEISVYEDRSFTFITKTPPAPVLLKKAAGIEKGSGEPNKAKVATVTKDQVREIANSKMQDLNAADEEAAMRIIEGTARSMGIVVE.

It belongs to the universal ribosomal protein uL11 family. As to quaternary structure, part of the ribosomal stalk of the 50S ribosomal subunit. Interacts with L10 and the large rRNA to form the base of the stalk. L10 forms an elongated spine to which L12 dimers bind in a sequential fashion forming a multimeric L10(L12)X complex. One or more lysine residues are methylated.

Functionally, forms part of the ribosomal stalk which helps the ribosome interact with GTP-bound translation factors. The chain is Large ribosomal subunit protein uL11 from Staphylococcus aureus (strain bovine RF122 / ET3-1).